The chain runs to 122 residues: Large ribosomal subunit protein bL17 (122 aa).

It belongs to the bacterial ribosomal protein bL17 family. Part of the 50S ribosomal subunit. Contacts protein L32.

The protein is Large ribosomal subunit protein bL17 of Staphylococcus carnosus (strain TM300).